A 290-amino-acid chain; its full sequence is MNPIQLDTLLSIIDEGSFEGASLALSISPSAVSQRVKALEHHVGRVLVSRTQPAKATEAGEVLVQAARKMVLLQAETKAQLSGRLAEIPLTIAINADSLSTWFPPVFNEVASWGGATLTLRLEDEAHTLSLLRRGDVLGAVTREANPVAGCEVVELGTMRHLAIATPSLRDAYMVDGKLDWAAMPVLRFGPKDVLQDRDLDGRVDGPVGRRRVSIVPSAEGFGEAIRRGLGWGLLPETQAAPMLKAGEVILLDEIPIDTPMYWQRWRLESRSLARLTDAVVDAAIEGLRP.

An HTH lysR-type domain is found at 1–57 (MNPIQLDTLLSIIDEGSFEGASLALSISPSAVSQRVKALEHHVGRVLVSRTQPAKAT). The H-T-H motif DNA-binding region spans 18 to 37 (FEGASLALSISPSAVSQRVK).

This sequence belongs to the LysR transcriptional regulatory family.

In terms of biological role, positively regulates the expression of the exporter LysE. Induction requires the presence of a coinducer, which is either intracellular L-lysine, L-arginine or L-citrulline. L-histidine also acts as a coinducer of lysE expression, but this amino acid is not exported by LysE. The lysEG system prevents bacteriostasis due to elevated L-lysine or L-arginine concentrations that arise during growth in the presence of peptides or in mutants possessing a deregulated biosynthesis pathway. This Corynebacterium glutamicum (strain ATCC 13032 / DSM 20300 / JCM 1318 / BCRC 11384 / CCUG 27702 / LMG 3730 / NBRC 12168 / NCIMB 10025 / NRRL B-2784 / 534) protein is Lysine export transcriptional regulatory protein LysG.